The chain runs to 677 residues: Transketolase (677 aa).

His27 contributes to the substrate binding site. Residues His66 and 114 to 116 (GPL) contribute to the thiamine diphosphate site. Residue Asp155 coordinates Mg(2+). Thiamine diphosphate is bound by residues Gly156 and Asn185. Asn185 and Ile187 together coordinate Mg(2+). 3 residues coordinate substrate: His261, Arg356, and Ser383. Position 261 (His261) interacts with thiamine diphosphate. Glu415 and Phe442 together coordinate thiamine diphosphate. Residue Glu415 is the Proton donor of the active site. 3 residues coordinate substrate: His466, Asp474, and Arg525.

This sequence belongs to the transketolase family. Homodimer. Requires Mg(2+) as cofactor. The cofactor is Ca(2+). Mn(2+) is required as a cofactor. Co(2+) serves as cofactor. It depends on thiamine diphosphate as a cofactor.

The catalysed reaction is D-sedoheptulose 7-phosphate + D-glyceraldehyde 3-phosphate = aldehydo-D-ribose 5-phosphate + D-xylulose 5-phosphate. In terms of biological role, catalyzes the transfer of a two-carbon ketol group from a ketose donor to an aldose acceptor, via a covalent intermediate with the cofactor thiamine pyrophosphate. The sequence is that of Transketolase (TKT) from Scheffersomyces stipitis (strain ATCC 58785 / CBS 6054 / NBRC 10063 / NRRL Y-11545) (Yeast).